A 93-amino-acid polypeptide reads, in one-letter code: Transcription factor PRE3 (93 aa).

The 56-residue stretch at 6–61 (SRSRQSSGTSRISEDQINDLIIKLQQLLPELRDSRRSDKVSAARVLQDTCNYIRNL) folds into the bHLH domain.

As to quaternary structure, homodimer. Interacts with BHLH 147, BHLH148, BHLH149, BHLH150 and IBH1. Interacts with SIEL. In terms of tissue distribution, expressed in root and shoot meristems, and young siliques. Low levels detected in all aerial tissues.

Its subcellular location is the nucleus. It is found in the cytoplasm. Its function is as follows. Atypical and probable non DNA-binding bHLH transcription factor required for MONOPTEROS-dependent root initiation in embryo. Promotes the correct definition of the hypophysis cell division plane. Transcriptionally controlled by MONOPTEROS. Moves from its site of synthesis in pro-embryos cells into the hypophysis. Regulates brassinosteroid (BR) signaling by sequestering negative BR signaling components. May function as positive regulator of gibberellin signaling. May play a role in the regulation of light signaling and possibly auxin signaling. This chain is Transcription factor PRE3 (PRE3), found in Arabidopsis thaliana (Mouse-ear cress).